The following is a 726-amino-acid chain: Fatty acid oxidation complex subunit alpha (726 aa).

The segment at 1-189 (MIYQGENLSV…KIGMVDGIVS (189 aa)) is enoyl-CoA hydratase/isomerase. A substrate-binding site is contributed by aspartate 296. The tract at residues 311–726 (EPVKNAAVLG…PKSSVSSPSV (416 aa)) is 3-hydroxyacyl-CoA dehydrogenase. Residues methionine 324, aspartate 343, 400 to 402 (VVE), lysine 407, and serine 429 each bind NAD(+). The active-site For 3-hydroxyacyl-CoA dehydrogenase activity is the histidine 450. Asparagine 453 lines the NAD(+) pocket. Substrate is bound by residues asparagine 500 and tyrosine 660.

It in the N-terminal section; belongs to the enoyl-CoA hydratase/isomerase family. This sequence in the C-terminal section; belongs to the 3-hydroxyacyl-CoA dehydrogenase family. In terms of assembly, heterotetramer of two alpha chains (FadB) and two beta chains (FadA).

It carries out the reaction a (3S)-3-hydroxyacyl-CoA + NAD(+) = a 3-oxoacyl-CoA + NADH + H(+). The enzyme catalyses a (3S)-3-hydroxyacyl-CoA = a (2E)-enoyl-CoA + H2O. It catalyses the reaction a 4-saturated-(3S)-3-hydroxyacyl-CoA = a (3E)-enoyl-CoA + H2O. The catalysed reaction is (3S)-3-hydroxybutanoyl-CoA = (3R)-3-hydroxybutanoyl-CoA. It carries out the reaction a (3Z)-enoyl-CoA = a 4-saturated (2E)-enoyl-CoA. The enzyme catalyses a (3E)-enoyl-CoA = a 4-saturated (2E)-enoyl-CoA. Its pathway is lipid metabolism; fatty acid beta-oxidation. Its function is as follows. Involved in the aerobic and anaerobic degradation of long-chain fatty acids via beta-oxidation cycle. Catalyzes the formation of 3-oxoacyl-CoA from enoyl-CoA via L-3-hydroxyacyl-CoA. It can also use D-3-hydroxyacyl-CoA and cis-3-enoyl-CoA as substrate. The chain is Fatty acid oxidation complex subunit alpha from Aliivibrio salmonicida (strain LFI1238) (Vibrio salmonicida (strain LFI1238)).